The sequence spans 199 residues: V-type proton ATPase subunit E (199 aa).

It belongs to the V-ATPase E subunit family.

In terms of biological role, produces ATP from ADP in the presence of a proton gradient across the membrane. This Clostridium botulinum (strain 657 / Type Ba4) protein is V-type proton ATPase subunit E.